The sequence spans 437 residues: GTPase Der (437 aa).

EngA-type G domains lie at 3–168 (PLIA…PVQE) and 178–353 (TNLA…ENRS). GTP-binding positions include 9 to 16 (GRPNVGKS), 56 to 60 (DTGGY), 120 to 123 (NKVE), 184 to 191 (GRPNVGKS), 231 to 235 (DTAGL), and 296 to 299 (NKWD). In terms of domain architecture, KH-like spans 354–437 (RKITTSALNR…VTVSLRFFKK (84 aa)).

It belongs to the TRAFAC class TrmE-Era-EngA-EngB-Septin-like GTPase superfamily. EngA (Der) GTPase family. Associates with the 50S ribosomal subunit.

GTPase that plays an essential role in the late steps of ribosome biogenesis. In Chlorobium phaeobacteroides (strain DSM 266 / SMG 266 / 2430), this protein is GTPase Der.